Consider the following 421-residue polypeptide: L-Ala-D/L-amino acid epimerase (421 aa).

Substrate contacts are provided by residues T193 and 218-220; that span reads KLK. Residues D247, E275, and D304 each contribute to the Mg(2+) site. Substrate contacts are provided by residues K328 and 380 to 382; that span reads DLD.

The protein belongs to the mandelate racemase/muconate lactonizing enzyme family. Mg(2+) is required as a cofactor.

In terms of biological role, catalyzes the epimerization of various hydrophobic and polar dipeptides. Has epimerase activity with L-Ala-L-Ala, L-Ala-L-Ser, L-Ala-L-Thr and L-Ala-L-Trp (in vitro). In Populus trichocarpa (Western balsam poplar), this protein is L-Ala-D/L-amino acid epimerase.